The following is a 233-amino-acid chain: MPKHSKRYLEARKLVDRTKYYDLDEAIELVKKTATAKFDETIELHIQTGIDYRKPEQHIRGTIVLPHGTGKEVKVLVFAKGEKAKEALEAGADYVGAEDLVEKIEKEGFLDFDVAIATPDMMRIIGRLGKILGPRGLMPSPKSGTVTQEVAEAVKEFKKGRIEVRTDKTGNIHIPVGKRSFDNEKLKENIIAAIKQIMQMKPAGVKGQFIKKAVLSSTMGPGIKLNLQSLLKE.

Belongs to the universal ribosomal protein uL1 family. As to quaternary structure, part of the 50S ribosomal subunit.

Functionally, binds directly to 23S rRNA. The L1 stalk is quite mobile in the ribosome, and is involved in E site tRNA release. Its function is as follows. Protein L1 is also a translational repressor protein, it controls the translation of the L11 operon by binding to its mRNA. The sequence is that of Large ribosomal subunit protein uL1 from Thermotoga sp. (strain RQ2).